We begin with the raw amino-acid sequence, 135 residues long: Succinate dehydrogenase assembly factor 2, mitochondrial (135 aa).

The protein belongs to the SDHAF2 family. As to quaternary structure, interacts with the flavoprotein subunit within the SDH catalytic dimer.

It localises to the mitochondrion matrix. Its function is as follows. Plays an essential role in the assembly of succinate dehydrogenase (SDH), an enzyme complex (also referred to as respiratory complex II) that is a component of both the tricarboxylic acid (TCA) cycle and the mitochondrial electron transport chain, and which couples the oxidation of succinate to fumarate with the reduction of ubiquinone (coenzyme Q) to ubiquinol. Required for flavinylation (covalent attachment of FAD) of the flavoprotein subunit of the SDH catalytic dimer. The polypeptide is Succinate dehydrogenase assembly factor 2, mitochondrial (Meyerozyma guilliermondii (strain ATCC 6260 / CBS 566 / DSM 6381 / JCM 1539 / NBRC 10279 / NRRL Y-324) (Yeast)).